Reading from the N-terminus, the 587-residue chain is Mitochondrial ribonuclease P catalytic subunit (587 aa).

Residues 1–46 (MTFYLSGFRSFLKLWKSNPYFELGPATSSASFFLGVHCVIGNQQRW) constitute a mitochondrion transit peptide. Residues 94–114 (KRSHLSGNPQNQGHTLPVKST) form a disordered region. Residues 98-114 (LSGNPQNQGHTLPVKST) show a composition bias toward polar residues. Positions 342–578 (IQKSGQCSSC…SCEVPTKWLC (237 aa)) constitute a PRORP domain. Cys348 and Cys351 together coordinate Zn(2+). The Mg(2+) site is built by Asp409, Asp478, Asp479, and Asp499. Positions 557 and 578 each coordinate Zn(2+).

Belongs to the PPR family. P subfamily. As to quaternary structure, catalytic component of mitochondrial ribonuclease P, a complex composed of TRMT10C/MRPP1, HSD17B10/MRPP2 and PRORP/MRPP3. Mg(2+) serves as cofactor. It depends on Mn(2+) as a cofactor. In terms of processing, degraded by LONP1 following mitochondrial unfolded protein response, probably leading to inhibit translation in mitochondrion.

The protein localises to the mitochondrion. The enzyme catalyses Endonucleolytic cleavage of RNA, removing 5'-extranucleotides from tRNA precursor.. Functionally, catalytic ribonuclease component of mitochondrial ribonuclease P, a complex composed of TRMT10C/MRPP1, HSD17B10/MRPP2 and PRORP/MRPP3, which cleaves tRNA molecules in their 5'-ends. The presence of TRMT10C/MRPP1, HSD17B10/MRPP2 is required to catalyze tRNA molecules in their 5'-ends. The sequence is that of Mitochondrial ribonuclease P catalytic subunit (Prorp) from Rattus norvegicus (Rat).